Reading from the N-terminus, the 218-residue chain is uncharacterized protein (218 aa).

It belongs to the HAD-like hydrolase superfamily.

It localises to the cytoplasm. The protein resides in the nucleus. This is an uncharacterized protein from Saccharomyces cerevisiae (strain ATCC 204508 / S288c) (Baker's yeast).